Here is a 311-residue protein sequence, read N- to C-terminus: Nucleotide-binding protein Acel_1111 (311 aa).

30–37 contributes to the ATP binding site; that stretch reads GLSGAGRS. 81–84 lines the GTP pocket; that stretch reads DVRS.

The protein belongs to the RapZ-like family.

Functionally, displays ATPase and GTPase activities. This chain is Nucleotide-binding protein Acel_1111, found in Acidothermus cellulolyticus (strain ATCC 43068 / DSM 8971 / 11B).